A 429-amino-acid chain; its full sequence is Serine--tRNA ligase (429 aa).

An L-serine-binding site is contributed by 234 to 236; it reads TSE. Residues 265 to 267 and valine 281 each bind ATP; that span reads RKE. Glutamate 288 is a binding site for L-serine. 352–355 lines the ATP pocket; sequence ELVS. L-serine is bound at residue threonine 389.

The protein belongs to the class-II aminoacyl-tRNA synthetase family. Type-1 seryl-tRNA synthetase subfamily. In terms of assembly, homodimer. The tRNA molecule probably binds across the dimer.

It catalyses the reaction tRNA(Ser) + L-serine + ATP = L-seryl-tRNA(Ser) + AMP + diphosphate + H(+). The enzyme catalyses tRNA(Sec) + L-serine + ATP = L-seryl-tRNA(Sec) + AMP + diphosphate + H(+). Its pathway is aminoacyl-tRNA biosynthesis; selenocysteinyl-tRNA(Sec) biosynthesis; L-seryl-tRNA(Sec) from L-serine and tRNA(Sec): step 1/1. Catalyzes the attachment of serine to tRNA(Ser). Is also probably able to aminoacylate tRNA(Sec) with serine, to form the misacylated tRNA L-seryl-tRNA(Sec), which will be further converted into selenocysteinyl-tRNA(Sec). The protein is Serine--tRNA ligase of Encephalitozoon cuniculi (strain GB-M1) (Microsporidian parasite).